Consider the following 312-residue polypeptide: Acetyl-coenzyme A carboxylase carboxyl transferase subunit alpha (312 aa).

The 251-residue stretch at Asn-36 to Glu-286 folds into the CoA carboxyltransferase C-terminal domain.

Belongs to the AccA family. Acetyl-CoA carboxylase is a heterohexamer composed of biotin carboxyl carrier protein (AccB), biotin carboxylase (AccC) and two subunits each of ACCase subunit alpha (AccA) and ACCase subunit beta (AccD).

It localises to the cytoplasm. It carries out the reaction N(6)-carboxybiotinyl-L-lysyl-[protein] + acetyl-CoA = N(6)-biotinyl-L-lysyl-[protein] + malonyl-CoA. It participates in lipid metabolism; malonyl-CoA biosynthesis; malonyl-CoA from acetyl-CoA: step 1/1. Functionally, component of the acetyl coenzyme A carboxylase (ACC) complex. First, biotin carboxylase catalyzes the carboxylation of biotin on its carrier protein (BCCP) and then the CO(2) group is transferred by the carboxyltransferase to acetyl-CoA to form malonyl-CoA. This chain is Acetyl-coenzyme A carboxylase carboxyl transferase subunit alpha, found in Campylobacter jejuni subsp. jejuni serotype O:6 (strain 81116 / NCTC 11828).